We begin with the raw amino-acid sequence, 64 residues long: Large ribosomal subunit protein bL35 (64 aa).

This sequence belongs to the bacterial ribosomal protein bL35 family.

This is Large ribosomal subunit protein bL35 from Aliivibrio fischeri (strain ATCC 700601 / ES114) (Vibrio fischeri).